A 146-amino-acid polypeptide reads, in one-letter code: uncharacterized protein (146 aa).

The region spanning 7–146 (LQINYKTDEL…EGHDILIWNP (140 aa)) is the N-acetyltransferase domain.

This is an uncharacterized protein from Staphylococcus epidermidis (strain ATCC 35984 / DSM 28319 / BCRC 17069 / CCUG 31568 / BM 3577 / RP62A).